Reading from the N-terminus, the 215-residue chain is MGKGDPKKPRGKMSSYAFFVQTCREEHKKKHPDASVNFSEFSKKCSERWKTMSAKEKGKFEDMAKADKARYEREMKTYIPPKGETKKKFKDPNAPKRPPSAFFLFCSEYRPKIKGEHPGLSIGDVAKKLGEMWNNTAADDKQPYEKKAAKLKEKYEKDIAAYRAKGKPDAAKKGVVKAEKSKKKKEEEEDEEDEEDEEEEEDEEDEDEEEDDDDE.

1 to 10 (MGKGDPKKPR) is a heparin binding site. A sufficient for interaction with HAVCR2 region spans residues 1 to 97 (MGKGDPKKPR…KFKDPNAPKR (97 aa)). 4 positions are modified to N6-acetyllysine: K3, K7, K8, and K12. Residues 3–15 (KGDPKKPRGKMSS) form an LPS binding (delipidated) region. The segment at residues 9–79 (PRGKMSSYAF…RYEREMKTYI (71 aa)) is a DNA-binding region (HMG box 1). Residue C23 is modified to Cysteine sulfonic acid (-SO3H); alternate. A disulfide bridge links C23 with C45. Residues 27–43 (HKKKHPDASVNFSEFSK) are NLS 1. The Nuclear localization signal (NLS) 1 signature appears at 27–43 (HKKKHPDASVNFSEFSK). Residues K28, K29, and K30 each carry the N6-acetyllysine modification. K28 is covalently cross-linked (Isoglutamyl lysine isopeptide (Lys-Gln) (interchain with Q-?)). A Phosphoserine modification is found at S35. At K43 the chain carries N6-acetyllysine. Residues K43 and K44 each participate in an isoglutamyl lysine isopeptide (Lys-Gln) (interchain with Q-?) cross-link. The residue at position 45 (C45) is a Cysteine sulfonic acid (-SO3H); alternate. An Isoglutamyl lysine isopeptide (Lys-Gln) (interchain with Q-?) cross-link involves residue K68. Positions 76 to 95 (KTYIPPKGETKKKFKDPNAP) are disordered. Residues 80–96 (PPKGETKKKFKDPNAPK) are LPS binding (Lipid A). Residues 83 to 94 (GETKKKFKDPNA) are compositionally biased toward basic and acidic residues. The cytokine-stimulating activity stretch occupies residues 89–108 (FKDPNAPKRPPSAFFLFCSE). K90 carries the N6-acetyllysine modification. The segment at residues 95-163 (PKRPPSAFFL…KYEKDIAAYR (69 aa)) is a DNA-binding region (HMG box 2). At S100 the chain carries Phosphoserine. Residue C106 is modified to Cysteine sulfonic acid (-SO3H). N6-acetyllysine is present on residues K127, K128, K141, K172, K173, K177, and K180. A binding to AGER/RAGE region spans residues 150 to 183 (KLKEKYEKDIAAYRAKGKPDAAKKGVVKAEKSKK). Basic and acidic residues predominate over residues 161–179 (AYRAKGKPDAAKKGVVKAE). The disordered stretch occupies residues 161 to 215 (AYRAKGKPDAAKKGVVKAEKSKKKKEEEEDEEDEEDEEEEEDEEDEDEEEDDDDE). The NLS 2 stretch occupies residues 178–184 (AEKSKKK). A Nuclear localization signal (NLS) 2 motif is present at residues 178-184 (AEKSKKK). K180 participates in a covalent cross-link: Isoglutamyl lysine isopeptide (Lys-Gln) (interchain with Q-?). Position 181 is an ADP-ribosylserine (S181). An N6-acetyllysine mark is found at K182, K183, K184, and K185. Isoglutamyl lysine isopeptide (Lys-Gln) (interchain with Q-?) cross-links involve residues K182, K183, and K184. The span at 187–215 (EEEDEEDEEDEEEEEDEEDEDEEEDDDDE) shows a compositional bias: acidic residues.

Belongs to the HMGB family. In terms of assembly, interacts (fully reduced HMGB1) with CXCL12; probably in a 1:2 ratio involving two molecules of CXCL12, each interacting with one HMG box of HMGB1; inhibited by glycyrrhizin. Associates with the TLR4:LY96 receptor complex. Component of the RAG complex composed of core components RAG1 and RAG2, and associated component HMGB1 or HMGB2. Interacts (in cytoplasm upon starvation) with BECN1; inhibits the interaction of BECN1 and BCL2 leading to promotion of autophagy. Interacts with KPNA1; involved in nuclear import. Interacts with SREBF1, TLR2, TLR4, TLR9, PTPRZ1, APEX1, FEN1, POLB, TERT. Interacts with IL1B, AGER, MSH2, XPA, XPC, HNF1A, TP53. Interacts with CD24; the probable CD24:SIGLEC10 complex is proposed to inhibit HGMB1-mediated tissue damage immune response. Interacts with THBD; prevents HGMB1 interaction with ACER/RAGE and inhibits HGMB1 pro-inflammatory activity. Interacts with HAVCR2; impairs HMGB1 binding to B-DNA and likely HMGB1-mediated innate immune response. Interacts with XPO1; mediating nuclear export. Interacts with receptor RAGE/AGER. In terms of processing, phosphorylated at serine residues. Phosphorylation in both NLS regions is required for cytoplasmic translocation followed by secretion. Acetylated on multiple sites upon stimulation with LPS. Acetylation on lysine residues in the nuclear localization signals (NLS 1 and NLS 2) leads to cytoplasmic localization and subsequent secretion. Acetylation on Lys-3 results in preferential binding to DNA ends and impairs DNA bending activity. Post-translationally, reduction/oxidation of cysteine residues Cys-23, Cys-45 and Cys-106 and a possible intramolecular disulfide bond involving Cys-23 and Cys-45 give rise to different redox forms with specific functional activities in various cellular compartments: 1- fully reduced HMGB1 (HMGB1C23hC45hC106h), 2- disulfide HMGB1 (HMGB1C23-C45C106h) and 3- sulfonyl HMGB1 (HMGB1C23soC45soC106so). In terms of processing, poly-ADP-ribosylated by PARP1 when secreted following stimulation with LPS. In vitro cleavage by CASP1 is liberating a HMG box 1-containing peptide which may mediate immunogenic activity; the peptide antagonizes apoptosis-induced immune tolerance. Can be proteolytically cleaved by a thrombin:thrombomodulin complex; reduces binding to heparin and pro-inflammatory activities. Post-translationally, forms covalent cross-links mediated by transglutaminase TGM2, between a glutamine and the epsilon-amino group of a lysine residue, forming homopolymers and heteropolymers.

It is found in the nucleus. The protein resides in the chromosome. It localises to the cytoplasm. The protein localises to the secreted. Its subcellular location is the cell membrane. It is found in the endosome. The protein resides in the endoplasmic reticulum-Golgi intermediate compartment. Multifunctional redox sensitive protein with various roles in different cellular compartments. In the nucleus is one of the major chromatin-associated non-histone proteins and acts as a DNA chaperone involved in replication, transcription, chromatin remodeling, V(D)J recombination, DNA repair and genome stability. Proposed to be an universal biosensor for nucleic acids. Promotes host inflammatory response to sterile and infectious signals and is involved in the coordination and integration of innate and adaptive immune responses. In the cytoplasm functions as a sensor and/or chaperone for immunogenic nucleic acids implicating the activation of TLR9-mediated immune responses, and mediates autophagy. Acts as a danger-associated molecular pattern (DAMP) molecule that amplifies immune responses during tissue injury. Released to the extracellular environment can bind DNA, nucleosomes, IL-1 beta, CXCL12, AGER isoform 2/sRAGE, lipopolysaccharide (LPS) and lipoteichoic acid (LTA), and activates cells through engagement of multiple surface receptors. In the extracellular compartment fully reduced HMGB1 (released by necrosis) acts as a chemokine, disulfide HMGB1 (actively secreted) as a cytokine, and sulfonyl HMGB1 (released from apoptotic cells) promotes immunological tolerance. Has proangiogenic activity. May be involved in platelet activation. Binds to phosphatidylserine and phosphatidylethanolamide. Bound to RAGE mediates signaling for neuronal outgrowth. May play a role in accumulation of expanded polyglutamine (polyQ) proteins. Its function is as follows. Nuclear functions are attributed to fully reduced HGMB1. Associates with chromatin and binds DNA with a preference to non-canonical DNA structures such as single-stranded DNA, DNA-containing cruciforms or bent structures, supercoiled DNA and ZDNA. Can bent DNA and enhance DNA flexibility by looping thus providing a mechanism to promote activities on various gene promoters by enhancing transcription factor binding and/or bringing distant regulatory sequences into close proximity. May be involved in nucleotide excision repair (NER), mismatch repair (MMR) and base excision repair (BER) pathways, and double strand break repair such as non-homologous end joining (NHEJ). Involved in V(D)J recombination by acting as a cofactor of the RAG complex: acts by stimulating cleavage and RAG protein binding at the 23 bp spacer of conserved recombination signal sequences (RSS). In vitro can displace histone H1 from highly bent DNA. Can restructure the canonical nucleosome leading to relaxation of structural constraints for transcription factor-binding. Enhances binding of sterol regulatory element-binding proteins (SREBPs) such as SREBF1 to their cognate DNA sequences and increases their transcriptional activities. Facilitates binding of TP53 to DNA. May be involved in mitochondrial quality control and autophagy in a transcription-dependent fashion implicating HSPB1. Can modulate the activity of the telomerase complex and may be involved in telomere maintenance. In terms of biological role, in the cytoplasm proposed to dissociate the BECN1:BCL2 complex via competitive interaction with BECN1 leading to autophagy activation. Can protect BECN1 and ATG5 from calpain-mediated cleavage and thus proposed to control their proautophagic and proapoptotic functions and to regulate the extent and severity of inflammation-associated cellular injury. In myeloid cells has a protective role against endotoxemia and bacterial infection by promoting autophagy. Involved in endosomal translocation and activation of TLR9 in response to CpG-DNA in macrophages. Functionally, in the extracellular compartment (following either active secretion or passive release) involved in regulation of the inflammatory response. Fully reduced HGMB1 (which subsequently gets oxidized after release) in association with CXCL12 mediates the recruitment of inflammatory cells during the initial phase of tissue injury; the CXCL12:HMGB1 complex triggers CXCR4 homodimerization. Induces the migration of monocyte-derived immature dendritic cells and seems to regulate adhesive and migratory functions of neutrophils implicating AGER/RAGE and ITGAM. Can bind to various types of DNA and RNA including microbial unmethylated CpG-DNA to enhance the innate immune response to nucleic acids. Proposed to act in promiscuous DNA/RNA sensing which cooperates with subsequent discriminative sensing by specific pattern recognition receptors. Promotes extracellular DNA-induced AIM2 inflammasome activation implicating AGER/RAGE. Disulfide HMGB1 binds to transmembrane receptors, such as AGER/RAGE, TLR2, TLR4 and probably TREM1, thus activating their signal transduction pathways. Mediates the release of cytokines/chemokines such as TNF, IL-1, IL-6, IL-8, CCL2, CCL3, CCL4 and CXCL10. Promotes secretion of interferon-gamma by macrophage-stimulated natural killer (NK) cells in concert with other cytokines like IL-2 or IL-12. TLR4 is proposed to be the primary receptor promoting macrophage activation and signaling through TLR4 seems to implicate LY96/MD-2. In bacterial LPS- or LTA-mediated inflammatory responses binds to the endotoxins and transfers them to CD14 for signaling to the respective TLR4:LY96 and TLR2 complexes. Contributes to tumor proliferation by association with ACER/RAGE. Can bind to IL1-beta and signals through the IL1R1:IL1RAP receptor complex. Binding to class A CpG activates cytokine production in plasmacytoid dendritic cells implicating TLR9, MYD88 and AGER/RAGE and can activate autoreactive B cells. Via HMGB1-containing chromatin immune complexes may also promote B cell responses to endogenous TLR9 ligands through a B-cell receptor (BCR)-dependent and ACER/RAGE-independent mechanism. Inhibits phagocytosis of apoptotic cells by macrophages; the function is dependent on poly-ADP-ribosylation and involves binding to phosphatidylserine on the cell surface of apoptotic cells. In adaptive immunity may be involved in enhancing immunity through activation of effector T-cells and suppression of regulatory T (TReg) cells. In contrast, without implicating effector or regulatory T-cells, required for tumor infiltration and activation of T-cells expressing the lymphotoxin LTA:LTB heterotrimer thus promoting tumor malignant progression. Also reported to limit proliferation of T-cells. Released HMGB1:nucleosome complexes formed during apoptosis can signal through TLR2 to induce cytokine production. Involved in induction of immunological tolerance by apoptotic cells; its pro-inflammatory activities when released by apoptotic cells are neutralized by reactive oxygen species (ROS)-dependent oxidation specifically on Cys-106. During macrophage activation by activated lymphocyte-derived self apoptotic DNA (ALD-DNA) promotes recruitment of ALD-DNA to endosomes. This is High mobility group protein B1 (HMGB1) from Canis lupus familiaris (Dog).